The primary structure comprises 368 residues: RING finger protein 32 (368 aa).

A disordered region spans residues 45-82 (RKKEKKSKSLKRDATAIIDTGLRKSTEGPNMEDPEKEY). An RING-type 1; atypical zinc finger spans residues 129-171 (CPICKEEFELHPQVLLSCSHVFHRACLQAFEKFTNKKTCPLCR). The IQ domain occupies 188–217 (RVKCATRIQAYWRGYIVRKWYRNLRKIIPP). Residues 295–358 (CSICLTPLSF…APFHVCPLCR (64 aa)) form an RING-type 2; atypical zinc finger.

Its subcellular location is the cytoplasm. May play a role in sperm formation. The protein is RING finger protein 32 (Rnf32) of Mus musculus (Mouse).